The following is a 391-amino-acid chain: Chalcone synthase 2 (391 aa).

Cys-164 is an active-site residue.

The protein belongs to the thiolase-like superfamily. Chalcone/stilbene synthases family.

The catalysed reaction is (E)-4-coumaroyl-CoA + 3 malonyl-CoA + 3 H(+) = 2',4,4',6'-tetrahydroxychalcone + 3 CO2 + 4 CoA. Its pathway is secondary metabolite biosynthesis; flavonoid biosynthesis. The primary product of this enzyme is 4,2',4',6'-tetrahydroxychalcone (also termed naringenin-chalcone or chalcone) which can under specific conditions spontaneously isomerize into naringenin. This chain is Chalcone synthase 2 (CHS2), found in Citrus sinensis (Sweet orange).